The chain runs to 388 residues: Succinate--CoA ligase [ADP-forming] subunit beta (388 aa).

The ATP-grasp domain occupies 9–244; the sequence is KQLFAEYGLP…PSQEDSREAE (236 aa). ATP contacts are provided by residues K46, 53–55, E99, T102, and E107; that span reads GRG. Positions 199 and 213 each coordinate Mg(2+). Substrate is bound by residues N264 and 321–323; that span reads GIV.

The protein belongs to the succinate/malate CoA ligase beta subunit family. As to quaternary structure, heterotetramer of two alpha and two beta subunits. Mg(2+) is required as a cofactor.

It carries out the reaction succinate + ATP + CoA = succinyl-CoA + ADP + phosphate. The catalysed reaction is GTP + succinate + CoA = succinyl-CoA + GDP + phosphate. It participates in carbohydrate metabolism; tricarboxylic acid cycle; succinate from succinyl-CoA (ligase route): step 1/1. In terms of biological role, succinyl-CoA synthetase functions in the citric acid cycle (TCA), coupling the hydrolysis of succinyl-CoA to the synthesis of either ATP or GTP and thus represents the only step of substrate-level phosphorylation in the TCA. The beta subunit provides nucleotide specificity of the enzyme and binds the substrate succinate, while the binding sites for coenzyme A and phosphate are found in the alpha subunit. The sequence is that of Succinate--CoA ligase [ADP-forming] subunit beta from Marinobacter nauticus (strain ATCC 700491 / DSM 11845 / VT8) (Marinobacter aquaeolei).